The primary structure comprises 1212 residues: DNA-directed RNA polymerase subunit beta' (1212 aa).

4 residues coordinate Zn(2+): Cys60, Cys62, Cys75, and Cys78. 3 residues coordinate Mg(2+): Asp450, Asp452, and Asp454. Zn(2+) is bound by residues Cys819, Cys893, Cys900, and Cys903.

It belongs to the RNA polymerase beta' chain family. The RNAP catalytic core consists of 2 alpha, 1 beta, 1 beta' and 1 omega subunit. When a sigma factor is associated with the core the holoenzyme is formed, which can initiate transcription. It depends on Mg(2+) as a cofactor. Zn(2+) serves as cofactor.

The catalysed reaction is RNA(n) + a ribonucleoside 5'-triphosphate = RNA(n+1) + diphosphate. In terms of biological role, DNA-dependent RNA polymerase catalyzes the transcription of DNA into RNA using the four ribonucleoside triphosphates as substrates. This chain is DNA-directed RNA polymerase subunit beta', found in Streptococcus uberis (strain ATCC BAA-854 / 0140J).